A 910-amino-acid chain; its full sequence is Inactive disease susceptibility protein LOV1 (910 aa).

Residues 22 to 60 (ARLNGIGEQVDGLKRQLGRLQSLLKDADAKKHESERVRN) are a coiled coil. The region spanning 169-461 (EQSVEALAGH…AAEGIITSSD (293 aa)) is the NB-ARC domain. LRR repeat units lie at residues 584-609 (LPLL…IGDL), 610-632 (IHLR…LRNL), and 634-655 (LLLY…LKEM).

It belongs to the disease resistance NB-LRR family. RPP8/HRT subfamily.

The chain is Inactive disease susceptibility protein LOV1 (LOV1) from Arabidopsis thaliana (Mouse-ear cress).